Consider the following 396-residue polypeptide: NAD(P)H oxidoreductase RTN4IP1, mitochondrial (396 aa).

The N-terminal 40 residues, 1 to 40 (MEFLKTCVLRRNACTAVCFWRSKVVQKPSVRRISTTSPRS), are a transit peptide targeting the mitochondrion. The 342-residue stretch at 52-393 (GKNEVLRFTQ…RGHARGKTVI (342 aa)) folds into the Enoyl reductase (ER) domain. S214, G216, V217, S237, Y255, N276, L300, A341, F343, H386, A387, and R388 together coordinate NADPH.

The protein belongs to the zinc-containing alcohol dehydrogenase family. Quinone oxidoreductase subfamily. As to quaternary structure, interacts with RTN4, UQCRC1 and UQCRC2. As to expression, widely expressed in mitochondria-enriched tissues. Found in heart, muscle, kidney, liver, brain and placenta.

Its subcellular location is the mitochondrion matrix. It localises to the mitochondrion outer membrane. The catalysed reaction is a 3-demethylubiquinone + NADH + 2 H(+) = a 3-demethylubiquinol + NAD(+). It catalyses the reaction a 3-demethylubiquinone + NADPH + 2 H(+) = a 3-demethylubiquinol + NADP(+). It carries out the reaction 3-demethylubiquinone-10 + NADH + 2 H(+) = 3-demethylubiquinol-10 + NAD(+). The enzyme catalyses 3-demethylubiquinone-10 + NADPH + 2 H(+) = 3-demethylubiquinol-10 + NADP(+). The protein operates within cofactor biosynthesis; ubiquinone biosynthesis. Its function is as follows. NAD(P)H oxidoreductase involved in the ubiquinone biosynthetic pathway. Required for the O-methyltransferase activity of COQ3. Able to catalyze the oxidoreduction of 3-demethylubiquinone into 3-demethylubiquinol in vitro. However, it is unclear if 3-demethylubiquinone constitutes a substrate in vivo. May also play a role in the regulation of retinal ganglion cell (RGC) neurite outgrowth, and hence in the development of the inner retina and optic nerve. Appears to be a potent inhibitor of regeneration following spinal cord injury. The protein is NAD(P)H oxidoreductase RTN4IP1, mitochondrial of Homo sapiens (Human).